A 552-amino-acid chain; its full sequence is Putative transport protein APJL_0985 (552 aa).

5 helical membrane passes run 4 to 24 (IAII…IGHI), 29 to 49 (VGLG…CTHL), 65 to 85 (FGLI…FFAS), 95 to 115 (GFAV…HKLF), and 161 to 181 (IAYP…RIIF). 2 consecutive RCK C-terminal domains span residues 190 to 275 (QEFD…ILGE) and 277 to 360 (ADVS…IIGD). 6 helical membrane passes run 370 to 390 (MLPI…PLYL), 403 to 425 (GGPL…YWFM), 438 to 458 (IVLF…DTLL), 463 to 483 (LAWM…TGFV), 492 to 512 (YLSL…LAFA), and 529 to 549 (VYPL…ILLW).

Belongs to the AAE transporter (TC 2.A.81) family. YidE subfamily.

It is found in the cell membrane. The polypeptide is Putative transport protein APJL_0985 (Actinobacillus pleuropneumoniae serotype 3 (strain JL03)).